The chain runs to 84 residues: U8-theraphotoxin-Hhn1b (84 aa).

The N-terminal stretch at 1 to 21 is a signal peptide; that stretch reads MKVVLIVCLVWVMAMMELVSC. Cystine bridges form between Cys23–Cys35, Cys29–Cys44, Cys34–Cys67, and Cys54–Cys75.

This sequence belongs to the AVIT (prokineticin) family. Expressed by the venom gland.

It is found in the secreted. The sequence is that of U8-theraphotoxin-Hhn1b from Cyriopagopus hainanus (Chinese bird spider).